The chain runs to 438 residues: GDP-mannose 6-dehydrogenase (438 aa).

Residues tyrosine 10, valine 11, aspartate 30, lysine 35, threonine 86, and threonine 124 each contribute to the NAD(+) site. The GDP-alpha-D-mannuronate site is built by glutamate 161, lysine 210, asparagine 214, histidine 217, asparagine 225, tyrosine 256, tyrosine 257, arginine 259, phenylalanine 262, and glycine 265. Residue cysteine 268 is part of the active site. An NAD(+)-binding site is contributed by lysine 271. Lysine 324 contacts GDP-alpha-D-mannuronate. Position 331 (arginine 331) interacts with NAD(+).

Belongs to the UDP-glucose/GDP-mannose dehydrogenase family.

The catalysed reaction is GDP-alpha-D-mannose + 2 NAD(+) + H2O = GDP-alpha-D-mannuronate + 2 NADH + 3 H(+). The protein operates within glycan biosynthesis; alginate biosynthesis. In terms of biological role, catalyzes the oxidation of guanosine diphospho-D-mannose (GDP-D-mannose) to GDP-D-mannuronic acid, a precursor for alginate polymerization. The alginate layer causes a mucoid phenotype and provides a protective barrier against host immune defenses and antibiotics. This Pseudomonas putida (strain ATCC 47054 / DSM 6125 / CFBP 8728 / NCIMB 11950 / KT2440) protein is GDP-mannose 6-dehydrogenase (algD).